Consider the following 315-residue polypeptide: Protoheme IX farnesyltransferase (315 aa).

Transmembrane regions (helical) follow at residues 21–41 (YFAL…LVGL), 52–74 (VGFC…NMWW), 98–118 (GEAL…LALA), 121–141 (LLAA…YSMW), 150–170 (IVIG…AATG), 177–197 (VLMF…LALF), 223–243 (ILVY…TPVA), 246–266 (LYLA…WDIW), and 284–304 (FFKF…AEAI).

Belongs to the UbiA prenyltransferase family. Protoheme IX farnesyltransferase subfamily. As to quaternary structure, interacts with CtaA.

It localises to the cell inner membrane. It catalyses the reaction heme b + (2E,6E)-farnesyl diphosphate + H2O = Fe(II)-heme o + diphosphate. It functions in the pathway porphyrin-containing compound metabolism; heme O biosynthesis; heme O from protoheme: step 1/1. In terms of biological role, converts heme B (protoheme IX) to heme O by substitution of the vinyl group on carbon 2 of heme B porphyrin ring with a hydroxyethyl farnesyl side group. The chain is Protoheme IX farnesyltransferase from Dinoroseobacter shibae (strain DSM 16493 / NCIMB 14021 / DFL 12).